The sequence spans 500 residues: Archaeal-type glutamate synthase [NADPH] (500 aa).

4Fe-4S ferredoxin-type domains follow at residues 7 to 38 (SKFIVDRIEDRCIKCKVCITQCSFDTHYYDED) and 40 to 69 (DQIKVRNQNCVGCHRCVTFCPTNALVVRNN). Residues Cys-18, Cys-21, Cys-24, Cys-28, Cys-49, Cys-52, Cys-55, and Cys-59 each coordinate [4Fe-4S] cluster.

Belongs to the glutamate synthase family. FMN is required as a cofactor.

It carries out the reaction 2 L-glutamate + NADP(+) = L-glutamine + 2-oxoglutarate + NADPH + H(+). The sequence is that of Archaeal-type glutamate synthase [NADPH] from Dehalococcoides mccartyi (strain ATCC BAA-2266 / KCTC 15142 / 195) (Dehalococcoides ethenogenes (strain 195)).